The primary structure comprises 181 residues: CASP-like protein 1F2 (181 aa).

The Cytoplasmic portion of the chain corresponds to 1–18 (MADIETKSSQNQPLKTQN). The chain crosses the membrane as a helical span at residues 19–39 (IFIGAQIFLRIVVIAASFAST). The Extracellular portion of the chain corresponds to 40-70 (WLMLTNKQTIDIGGFVLDANYSYSPEFKFLS). Residue Asn59 is glycosylated (N-linked (GlcNAc...) asparagine). Residues 71-91 (YANIVVGAFSFVSLLFLVLVG) form a helical membrane-spanning segment. Residues 92-100 (RRSSNPTYY) lie on the Cytoplasmic side of the membrane. A helical transmembrane segment spans residues 101–121 (FILFLHDLALMSLVLGGCAAA). The Extracellular segment spans residues 122-150 (TVIGSLGKYGNSHTGWMQICDHFGKFCKR). Residues 151 to 171 (ATTSVAFSYFSLVCLLILTIT) form a helical membrane-spanning segment. The Cytoplasmic segment spans residues 172 to 181 (SASKSRQIQV).

It belongs to the Casparian strip membrane proteins (CASP) family. In terms of assembly, homodimer and heterodimers.

The protein resides in the cell membrane. The protein is CASP-like protein 1F2 of Populus trichocarpa (Western balsam poplar).